Reading from the N-terminus, the 463-residue chain is Vacuolar cation/proton exchanger 1 (463 aa).

Ala2 is subject to N-acetylalanine. Topologically, residues Ala2–Glu68 are cytoplasmic. Positions Ser25–Thr33 are required for autoinhibitory regulation. Positions Tyr56–Phe62 are required for interaction with autoinhibitory region. A helical transmembrane segment spans residues Val69–Thr89. Positions Ile87–Gln95 are required for Ca(2+)/H(+) exchange activity. The Extracellular segment spans residues Tyr90–Pro96. The chain crosses the membrane as a helical span at residues Trp97 to Leu116. The Cytoplasmic portion of the chain corresponds to Thr117–Thr127. The helical transmembrane segment at Leu128–Ala148 threads the bilayer. Positions Gly137–Val172 are cation selection. Residues Leu149–Leu161 lie on the Extracellular side of the membrane. Residues Leu162 to Ile182 traverse the membrane as a helical segment. Topologically, residues Ala183–Asp197 are cytoplasmic. Residues Val198–Tyr218 form a helical membrane-spanning segment. The Extracellular segment spans residues Leu219–Arg238. Residues Gly239–His259 traverse the membrane as a helical segment. The Cytoplasmic portion of the chain corresponds to Arg260–Ala281. Residues Val282–Leu302 traverse the membrane as a helical segment. At Ser303–Ser325 the chain is on the extracellular side. The N-linked (GlcNAc...) asparagine glycan is linked to Asn318. A helical transmembrane segment spans residues Ile326–Phe346. The tract at residues Gly333–Val368 is cation selection. The Cytoplasmic segment spans residues Lys347 to Ser360. Residues Ala361 to Ile381 traverse the membrane as a helical segment. Over Asn382 to Asp384 the chain is Extracellular. Residues Leu385 to Thr405 form a helical membrane-spanning segment. Topologically, residues Leu406 to Ser411 are cytoplasmic. The chain crosses the membrane as a helical span at residues His412–Val432. Residues Asp433–Ser463 lie on the Extracellular side of the membrane.

Belongs to the Ca(2+):cation antiporter (CaCA) (TC 2.A.19) family. Cation/proton exchanger (CAX) subfamily. Interacts with GRXS14 and CXIP4. In terms of tissue distribution, expressed at low levels in leaves, stems and flowers.

The protein resides in the vacuole membrane. With respect to regulation, activated by monothiol glutaredoxin GRXS14 and CXIP4. Inhibited by excess of Ca(2+) and Cd(2+), Na(+) and K(+), but not Mn(2+). Functionally, vacuolar cation/proton exchanger (CAX). Translocates Ca(2+) and other metal ions into vacuoles using the proton gradient formed by H(+)-ATPase and H(+)-pyrophosphatase. Involved in ion homeostasis in association with CAX3. May play a role in cold-acclimation response. The sequence is that of Vacuolar cation/proton exchanger 1 (CAX1) from Arabidopsis thaliana (Mouse-ear cress).